We begin with the raw amino-acid sequence, 541 residues long: Chaperonin GroEL (541 aa).

ATP-binding positions include 29–32, 86–90, G413, 478–480, and D494; these read TLGP, DGTTT, and DAL.

The protein belongs to the chaperonin (HSP60) family. In terms of assembly, forms a cylinder of 14 subunits composed of two heptameric rings stacked back-to-back. Interacts with the co-chaperonin GroES.

Its subcellular location is the cytoplasm. It carries out the reaction ATP + H2O + a folded polypeptide = ADP + phosphate + an unfolded polypeptide.. Functionally, together with its co-chaperonin GroES, plays an essential role in assisting protein folding. The GroEL-GroES system forms a nano-cage that allows encapsulation of the non-native substrate proteins and provides a physical environment optimized to promote and accelerate protein folding. The sequence is that of Chaperonin GroEL from Alkaliphilus oremlandii (strain OhILAs) (Clostridium oremlandii (strain OhILAs)).